The chain runs to 51 residues: uncharacterized protein (51 aa).

This is an uncharacterized protein from Dictyostelium discoideum (Social amoeba).